We begin with the raw amino-acid sequence, 870 residues long: Dynamin-2 (870 aa).

Positions 28–294 (HLDLPQIAVV…LTNHIRESLP (267 aa)) constitute a Dynamin-type G domain. The interval 38–45 (GGQSAGKS) is G1 motif. Residues S41, G43, K44, S45, S46, R59, and G60 each contribute to the GDP site. The segment at 64–66 (VTR) is G2 motif. Residues 136-139 (DLPG) form a G3 motif region. A G4 motif region spans residues 205–208 (TKLD). Residues K206, D208, and D211 each contribute to the GDP site. Y231 bears the Phosphotyrosine mark. The interval 235 to 238 (VNRS) is G5 motif. GDP-binding residues include N236, R237, and Q239. At K299 the chain carries N6-acetyllysine. Residues 519-625 (LVIRRGWLTI…WKASFLRAGV (107 aa)) form the PH domain. Y597 bears the Phosphotyrosine mark. K598 bears the N6-acetyllysine mark. A GED domain is found at 653 to 744 (VETIRNLVDS…IIGDISTSTV (92 aa)). The tract at residues 741-870 (TSTVSTPVPP…IRPAEPSLLD (130 aa)) is disordered. At T755 the chain carries Phosphothreonine. Polar residues predominate over residues 756–767 (WLQNTSGHSPTP). The residue at position 764 (S764) is a Phosphoserine; by CDK1. Pro residues predominate over residues 826–846 (SAPPQIPSRPARIPPGIPPGV). Residues 847–864 (PSRRAPAAPSRPTIIRPA) show a composition bias toward low complexity.

It belongs to the TRAFAC class dynamin-like GTPase superfamily. Dynamin/Fzo/YdjA family. In terms of assembly, oligomerizes into a helical polymer that self-assembles around the vesicle membrane, when associated to the menbrane through lipid binding. Interacts with SHANK1 and SHANK2. Interacts with SNX9. Interacts (via C-terminal proline-rich domain (PRD)) with SNX18 (via SH3 domain); this interaction regulates ATG9A and ATG16L1 trafficking from recycling endosomes to sites of autophagosome formation. Interacts with SNX33 (via SH3 domain). Interacts with MYO1E (via SH3 domain). Interacts with PSTPIP1 (via SH3 domain). Interacts with CTNND2. Interacts (via C-terminal proline-rich domain (PRD)) with BIN1 (via SH3 domain); this interaction allows the recruitment of DNM2 to the membrane tubules and inhibits self-assembly-stimulated GTPase activity on the membrane. Interacts with GABARAP, GABARAPL1 and GABARAPL2. Interacts with MAP1LC3B (the lipidate and non-lipidated LC3 form); this interaction mediates recycling endosome scission leading to autophagosome release. Interacts with ITSN1. Interacts (via C-terminal proline-rich domain (PRD)) with SH3BP4 (via SH3 domain); this interaction controls the GTPase activity and is prevented by EGFR-induced tyrosine phosphorylation of either DNM2 or SH3BP4. Interacts with MYOF. May interact with PIK3C3. May be a component of a complex composed of RAB5A (in GDP-bound form), DYN2 and PIK3C3. Interacts with SDC4; this interaction is markedly enhanced at focal ahesion site upon induction of focal adhesions and stress-fiber formation. Interacts with ACTN1. Interacts with CTTN; this interaction stimulates the intrinsic GTPase activity of DNM2 and stabilizes the association of DNM2 and actin filaments; in addition this interaction is stimulated by ligand binding to the receptor, leading to the recruitment of the DNM2-CTTN complex to the sequestered receptor-ligand complex to its internalization. Interacts with NOSTRIN (via SH3 domain); this interaction allows the recruitment of NOS3 to dynamin-positive structures. Interacts with TUBG1; this interaction may participate in centrosome cohesion. Post-translationally, phosphorylation at Ser-848 by GSK3-alpha relieves the inhibition of BIN1 and promotes endocytosis. Phosphorylation at Ser-764 by CDK1 is greatly increased upon mitotic entry. It regulates cytokinesis downstream of calcineurin, and does not affect clathrin-mediated endocytosis. Dephosphorylated by calcineurin/PP2 during cytokinesis in a Ca(2+)- and calmodulin-dependent manner. Phosphorylated on tyrosine residues by EGFR. Phosphorylated on tyrosine residues after activation of SRC. Expressed in most tissues during embryonic development, including the peripheral nervous system although no expression is evident in skeletal muscle or heart.

It is found in the cytoplasm. The protein resides in the cytoskeleton. It localises to the cytoplasmic vesicle. Its subcellular location is the clathrin-coated vesicle. The protein localises to the cell projection. It is found in the uropodium. The protein resides in the endosome. It localises to the microtubule organizing center. Its subcellular location is the centrosome. The protein localises to the centriole. It is found in the recycling endosome. The protein resides in the phagocytic cup. It localises to the phagosome membrane. Its subcellular location is the podosome. The protein localises to the cell junction. It is found in the postsynaptic density. The protein resides in the synapse. It localises to the synaptosome. Its subcellular location is the midbody. The protein localises to the membrane. It is found in the clathrin-coated pit. It carries out the reaction GTP + H2O = GDP + phosphate + H(+). In terms of biological role, catalyzes the hydrolysis of GTP and utilizes this energy to mediate vesicle scission at plasma membrane during endocytosis and filament remodeling at many actin structures during organization of the actin cytoskeleton. Plays an important role in vesicular trafficking processes, namely clathrin-mediated endocytosis (CME), exocytic and clathrin-coated vesicle from the trans-Golgi network, and PDGF stimulated macropinocytosis. During vesicular trafficking process, associates to the membrane, through lipid binding, and self-assembles into ring-like structure through oligomerization to form a helical polymer around the vesicle membrane and leading to vesicle scission. Plays a role in organization of the actin cytoskeleton by mediating arrangement of stress fibers and actin bundles in podocytes. During organization of the actin cytoskeleton, self-assembles into ring-like structure that directly bundles actin filaments to form typical membrane tubules decorated with dynamin spiral polymers. Self-assembly increases GTPase activity and the GTP hydrolysis causes the rapid depolymerization of dynamin spiral polymers, and results in dispersion of actin bundles. Remodels, through its interaction with CTTN, bundled actin filaments in a GTPase-dependent manner and plays a role in orchestrating the global actomyosin cytoskeleton. The interaction with CTTN stabilizes the interaction of DNM2 and actin filaments and stimulates the intrinsic GTPase activity that results in actin filament-barbed ends and increases the sensitivity of filaments in bundles to the actin depolymerizing factor, CFL1. Plays a role in the autophagy process, by participating in the formation of ATG9A vesicles destined for the autophagosomes through its interaction with SNX18, by mediating recycling endosome scission leading to autophagosome release through MAP1LC3B interaction. Also regulates maturation of apoptotic cell corpse-containing phagosomes by recruiting PIK3C3 to the phagosome membrane. Also plays a role in cytokinesis. May participate in centrosome cohesion through its interaction with TUBG1. Plays a role in the regulation of neuron morphology, axon growth and formation of neuronal growth cones. Involved in membrane tubulation. The protein is Dynamin-2 of Mus musculus (Mouse).